The sequence spans 784 residues: MRRSLAPSQRLGVRLQPNQEFTPPLLQKKNKRTCQQEQEQLQCQFALRDATNSNGSIPLPIRFTANSEYELAIAKVLARKFKVPIANYVPDYGGNRCLGVRRSIVRRALHDPQACNALVLYTPPVYSEHERMKMDPTKILVHVVVDPLLSNILRPHQREGVRFMYDCVEGKKGNFNGCIMADEMGLGKTLQCVTLVWTLLRQSCECKPTITKAIIVSPSSLVKNWEKEFTKWLHGRMHCLAMEGGSKEDTIKALEQFSMNTSTRLGTPVLLISYETFRIYANILCQNEVGMVICDEGHRLKNSDNLTYQALMGLKTKRRVLLSGTPIQNDLTEYFSLVNFVNPEMLGTAADFKRNFENPILKGQNTDSSDKERERALEKTQELIGLVNQCIIRRTNQILTKYLPVKFEMVICVRLTSVQLEFYTNFLKSDKVRRSLADCNEKASLTALADITTLKKLCSHPDLIYEKMLARDKGFENSQNILPTNYKPKDLNPELSGKFMLLDFMLATIRANSDDKVVLISNYTQTLDLFEQLARKRKYTFVRLDGTMTIKKRSKVVDRFNDPENDCFLFMLSSKAGGCGLNLIGANRLFMFDPDWNPANDEQAMARVWRDGQKKPCYIYRLVASGSIEEKILQRQTHKKSLSSTIIDNNESAEKHFTRDDLKDLFSFDSKILSDTHEKLKCKRCLQNVQTKPPPEDTDCTSHLSQWFHCSNNRGLPDDILAQAWTASKCVSFVFHHRSQAQAIKESEETKQEAEDTSIPAKSKRKRSTTPESDDCNDEDFKGF.

A required for chromatin remodeling, strand pairing activities and coupling of ATPase activity region spans residues 2 to 9 (RRSLAPSQ). At Thr22 the chain carries Phosphothreonine. A Helicase ATP-binding domain is found at 169–344 (EGKKGNFNGC…FSLVNFVNPE (176 aa)). 182-189 (DEMGLGKT) serves as a coordination point for ATP. The DEGH box motif lies at 295–298 (DEGH). The 158-residue stretch at 501–658 (LLDFMLATIR…NNESAEKHFT (158 aa)) folds into the Helicase C-terminal domain. The interval 742-784 (QAIKESEETKQEAEDTSIPAKSKRKRSTTPESDDCNDEDFKGF) is disordered. The span at 745–754 (KESEETKQEA) shows a compositional bias: basic and acidic residues.

The protein belongs to the SNF2/RAD54 helicase family. In terms of assembly, interacts (via N-terminus) with spn-A/Rad51.

The protein resides in the nucleus. Its function is as follows. Involved in mitotic DNA repair and meiotic recombination. Functions in the recombinational DNA repair pathway. Essential for interhomolog gene conversion (GC), but may have a less important role in intersister GC than spn-A/Rad51. In the presence of DNA, spn-A/Rad51 enhances the ATPase activity of okr/Rad54. In Drosophila willistoni (Fruit fly), this protein is DNA repair and recombination protein RAD54-like.